The sequence spans 270 residues: Undecaprenyl-diphosphatase 2 (270 aa).

A run of 8 helical transmembrane segments spans residues 1 to 21 (MDLI…FLPV), 39 to 59 (QGLA…VWYF), 87 to 107 (WAVI…KGFI), 114 to 134 (PLVI…SDVV), 147 to 167 (LSWK…IPGT), 190 to 210 (FSFL…TLDL), 221 to 241 (AMGL…HFFL), and 247 to 267 (VGML…LVLF).

The protein belongs to the UppP family.

It localises to the cell inner membrane. The catalysed reaction is di-trans,octa-cis-undecaprenyl diphosphate + H2O = di-trans,octa-cis-undecaprenyl phosphate + phosphate + H(+). Its function is as follows. Catalyzes the dephosphorylation of undecaprenyl diphosphate (UPP). Confers resistance to bacitracin. This chain is Undecaprenyl-diphosphatase 2, found in Stutzerimonas stutzeri (strain A1501) (Pseudomonas stutzeri).